Consider the following 203-residue polypeptide: Large ribosomal subunit protein bL25 (203 aa).

This sequence belongs to the bacterial ribosomal protein bL25 family. CTC subfamily. As to quaternary structure, part of the 50S ribosomal subunit; part of the 5S rRNA/L5/L18/L25 subcomplex. Contacts the 5S rRNA. Binds to the 5S rRNA independently of L5 and L18.

Functionally, this is one of the proteins that binds to the 5S RNA in the ribosome where it forms part of the central protuberance. This Rickettsia conorii (strain ATCC VR-613 / Malish 7) protein is Large ribosomal subunit protein bL25.